The primary structure comprises 251 residues: Methionine aminopeptidase (251 aa).

Substrate is bound at residue H76. A divalent metal cation contacts are provided by D93, D104, and H168. H175 serves as a coordination point for substrate. A divalent metal cation contacts are provided by E202 and E233.

It belongs to the peptidase M24A family. Methionine aminopeptidase type 1 subfamily. Monomer. Requires Co(2+) as cofactor. It depends on Zn(2+) as a cofactor. Mn(2+) serves as cofactor. Fe(2+) is required as a cofactor.

It carries out the reaction Release of N-terminal amino acids, preferentially methionine, from peptides and arylamides.. Removes the N-terminal methionine from nascent proteins. The N-terminal methionine is often cleaved when the second residue in the primary sequence is small and uncharged (Met-Ala-, Cys, Gly, Pro, Ser, Thr, or Val). Requires deformylation of the N(alpha)-formylated initiator methionine before it can be hydrolyzed. The polypeptide is Methionine aminopeptidase (Staphylococcus epidermidis (strain ATCC 35984 / DSM 28319 / BCRC 17069 / CCUG 31568 / BM 3577 / RP62A)).